The following is a 225-amino-acid chain: Thymidylate kinase (225 aa).

Gly-10–Thr-17 contacts ATP.

The protein belongs to the thymidylate kinase family.

It carries out the reaction dTMP + ATP = dTDP + ADP. Functionally, phosphorylation of dTMP to form dTDP in both de novo and salvage pathways of dTTP synthesis. The sequence is that of Thymidylate kinase from Trichodesmium erythraeum (strain IMS101).